A 469-amino-acid polypeptide reads, in one-letter code: Glutamate--tRNA ligase (469 aa).

The 'HIGH' region signature appears at 9–19; sequence PSPTGFLHVGG. 4 residues coordinate Zn(2+): Cys-98, Cys-100, Cys-125, and Asp-127. Residues 236 to 240 carry the 'KMSKS' region motif; sequence KLSKR. An ATP-binding site is contributed by Lys-239.

The protein belongs to the class-I aminoacyl-tRNA synthetase family. Glutamate--tRNA ligase type 1 subfamily. As to quaternary structure, monomer. Zn(2+) serves as cofactor.

The protein resides in the cytoplasm. It catalyses the reaction tRNA(Glu) + L-glutamate + ATP = L-glutamyl-tRNA(Glu) + AMP + diphosphate. Its function is as follows. Catalyzes the attachment of glutamate to tRNA(Glu) in a two-step reaction: glutamate is first activated by ATP to form Glu-AMP and then transferred to the acceptor end of tRNA(Glu). This chain is Glutamate--tRNA ligase, found in Shewanella loihica (strain ATCC BAA-1088 / PV-4).